The primary structure comprises 911 residues: MVDYHAASQSYQYGPSSAGNGAGGGGSMGDYMAQEDDWDRDLLLDPAWEKQQRKTFTAWCNSHLRKAGTQIENIDEDFRDGLKLMLLLEVISGERLPKPERGKMRVHKINNVNKALDFIASKGVKLVSIGAEEIVDGNAKMTLGMIWTIILRFAIQDISVEETSAKEGLLLWCQRKTAPYKNVNVQNFHISWKDGLAFNALIHRHRPELIEYDKLRKDDPVTNLNNAFEVAEKYLDIPKMLDAEDIVNTARPDEKAIMTYVSSFYHAFSGAQKAETAANRICRVLAVNQENEHLMEDYEKLASDLLEWIRRTIPWLEDRVPQKTIQEMQQKLEDFRDYRRVHKPPKVQEKCQLEINFNTLQTKLRLSNRPAFMPSEGKMVSDINNGWQHLEQAEKGYEEWLLNEIRRLERLDHLAEKFRQKASIHEAWTDGKEAMLKHRDYETATLSDIKALIRKHEAFESDLAAHQDRVEQIAAIAQELNELDYYDSHNVNTRCQKICDQWDALGSLTHSRREALEKTEKQLEAIDQLHLEYAKRAAPFNNWMESAMEDLQDMFIVHTIEEIEGLISAHDQFKSTLPDADREREAILAIHKEAQRIAESNHIKLSGSNPYTTVTPQIINSKWEKVQQLVPKRDHALLEEQSKQQSNEHLRRQFASQANVVGPWIQTKMEEIGRISIEMNGTLEDQLSHLKQYERSIVDYKPNLDLLEQQHQLIQEALIFDNKHTNYTMEHIRVGWEQLLTTIARTINEVENQILTRDAKGISQEQMQEFRASFNHFDKDHGGALGPEEFKACLISLGYDVENDRQGEAEFNRIMSLVDPNHSGLVTFQAFIDFMSRETTDTDTADQVIASFKVLAGDKNFITAEELRRELPPDQAEYCIARMAPYQGPDAVPGALDYKSFSTALYGESDL.

The tract at residues 1–30 is disordered; it reads MVDYHAASQSYQYGPSSAGNGAGGGGSMGD. The tract at residues 1 to 269 is actin-binding; that stretch reads MVDYHAASQS…YVSSFYHAFS (269 aa). An interaction with VCL region spans residues 12-26; sequence QYGPSSAGNGAGGGG. Tyr31 bears the Phosphotyrosine mark. The segment at 40–61 is interaction with VCL; it reads RDLLLDPAWEKQQRKTFTAWCN. 2 consecutive Calponin-homology (CH) domains span residues 50–154 and 163–269; these read KQQR…LRFA and TSAK…HAFS. The short motif at 84–88 is the LXXLL motif element; it reads LMLLL. The segment at 108-126 is interaction with VCL; sequence KINNVNKALDFIASKGVKL. The residue at position 114 (Lys114) is an N6-acetyllysine. The interval 177-192 is polyphosphoinositide (PIP2)-binding; it reads TAPYKNVNVQNFHISW. At Lys214 the chain carries N6-acetyllysine. Thr249 carries the post-translational modification Phosphothreonine. Spectrin repeat units lie at residues 293 to 403, 413 to 518, 528 to 639, and 649 to 752; these read HLME…WLLN, HLAE…ALEK, QLHL…ALLE, and HLRR…EVEN. N6-acetyllysine occurs at positions 592 and 625. Residue Ser696 is modified to Phosphoserine. The tract at residues 736 to 911 is mediates interaction with MICALL2; it reads WEQLLTTIAR…STALYGESDL (176 aa). 2 EF-hand domains span residues 765–800 and 806–841; these read EQMQEFRASFNHFDKDHGGALGPEEFKACLISLGYD and QGEAEFNRIMSLVDPNHSGLVTFQAFIDFMSRETTD. Asp778 contacts Ca(2+). An N6-acetyllysine modification is found at Lys779. Positions 780 and 789 each coordinate Ca(2+). Lys859 carries the N6-acetyllysine modification. Residue Ser909 is modified to Phosphoserine.

Belongs to the alpha-actinin family. In terms of assembly, homodimer; antiparallel. Identified in a IGF2BP1-dependent mRNP granule complex containing untranslated mRNAs. Component of the CART complex, at least composed of ACTN4, HGS/HRS, MYO5B and TRIM3. Binds TRIM3 at the N-terminus. Interacts with MAGI1. Interacts with PDLIM2. Identified in a complex with CASK, IQGAP1, MAGI2, NPHS1, SPTAN1 and SPTBN1. Interacts with MICALL2 (preferentially in opened conformation); stimulated by RAB13 activation. Interacts with PPARG and RARA. Binds to VCL; this interaction triggers VCL conformational changes. Interacts with SEPTIN14. Interacts with IGSF8.

It is found in the nucleus. The protein localises to the cytoplasm. Its subcellular location is the cell junction. It localises to the cytoskeleton. The protein resides in the stress fiber. It is found in the perinuclear region. F-actin cross-linking protein which is thought to anchor actin to a variety of intracellular structures. This is a bundling protein. Probably involved in vesicular trafficking via its association with the CART complex. The CART complex is necessary for efficient transferrin receptor recycling but not for EGFR degradation. Involved in tight junction assembly in epithelial cells probably through interaction with MICALL2. Links MICALL2 to the actin cytoskeleton and recruits it to the tight junctions. May also function as a transcriptional coactivator, stimulating transcription mediated by the nuclear hormone receptors PPARG and RARA. Association with IGSF8 regulates the immune synapse formation and is required for efficient T-cell activation. The polypeptide is Alpha-actinin-4 (Pongo abelii (Sumatran orangutan)).